The following is a 202-amino-acid chain: Large ribosomal subunit protein uL18 (202 aa).

Belongs to the universal ribosomal protein uL18 family. As to quaternary structure, part of the 50S ribosomal subunit. Contacts the 5S and 23S rRNAs.

This is one of the proteins that bind and probably mediate the attachment of the 5S RNA into the large ribosomal subunit, where it forms part of the central protuberance. In Staphylothermus marinus (strain ATCC 43588 / DSM 3639 / JCM 9404 / F1), this protein is Large ribosomal subunit protein uL18.